Consider the following 475-residue polypeptide: Ribulose bisphosphate carboxylase large chain (475 aa).

Positions 1–2 are excised as a propeptide; that stretch reads MV. N-acetylproline is present on Pro3. Position 14 is an N6,N6,N6-trimethyllysine (Lys14). Substrate contacts are provided by Asn123 and Thr173. Lys175 functions as the Proton acceptor in the catalytic mechanism. Lys177 is a binding site for substrate. Positions 201, 203, and 204 each coordinate Mg(2+). Lys201 carries the post-translational modification N6-carboxylysine. Residue His294 is the Proton acceptor of the active site. Substrate contacts are provided by Arg295, His327, and Ser379.

This sequence belongs to the RuBisCO large chain family. Type I subfamily. In terms of assembly, heterohexadecamer of 8 large chains and 8 small chains. Requires Mg(2+) as cofactor.

The protein localises to the plastid. It localises to the chloroplast. The enzyme catalyses 2 (2R)-3-phosphoglycerate + 2 H(+) = D-ribulose 1,5-bisphosphate + CO2 + H2O. The catalysed reaction is D-ribulose 1,5-bisphosphate + O2 = 2-phosphoglycolate + (2R)-3-phosphoglycerate + 2 H(+). In terms of biological role, ruBisCO catalyzes two reactions: the carboxylation of D-ribulose 1,5-bisphosphate, the primary event in carbon dioxide fixation, as well as the oxidative fragmentation of the pentose substrate in the photorespiration process. Both reactions occur simultaneously and in competition at the same active site. This is Ribulose bisphosphate carboxylase large chain from Dunaliella tertiolecta (Green alga).